The primary structure comprises 432 residues: Lipid-A-disaccharide synthase (432 aa).

Polar residues predominate over residues 1 to 11 (MTGIGNQTSGI). Residues 1 to 35 (MTGIGNQTSGIETGVHDRAPADGEPTALPISHSPL) are disordered.

It belongs to the LpxB family.

The catalysed reaction is a lipid X + a UDP-2-N,3-O-bis[(3R)-3-hydroxyacyl]-alpha-D-glucosamine = a lipid A disaccharide + UDP + H(+). It functions in the pathway bacterial outer membrane biogenesis; LPS lipid A biosynthesis. Condensation of UDP-2,3-diacylglucosamine and 2,3-diacylglucosamine-1-phosphate to form lipid A disaccharide, a precursor of lipid A, a phosphorylated glycolipid that anchors the lipopolysaccharide to the outer membrane of the cell. The protein is Lipid-A-disaccharide synthase of Xanthomonas oryzae pv. oryzae (strain MAFF 311018).